The primary structure comprises 115 residues: NADH-ubiquinone oxidoreductase chain 3 (115 aa).

Transmembrane regions (helical) follow at residues 3 to 23, 55 to 75, and 84 to 104; these read FVLILMTNTLLALLLMIITFW, FFLVAITFLLFDLEIALLLPL, and LPLMVMSSLLLITILALSLAY.

The protein belongs to the complex I subunit 3 family. As to quaternary structure, core subunit of respiratory chain NADH dehydrogenase (Complex I) which is composed of 45 different subunits. Interacts with TMEM186. Interacts with TMEM242.

It localises to the mitochondrion inner membrane. The catalysed reaction is a ubiquinone + NADH + 5 H(+)(in) = a ubiquinol + NAD(+) + 4 H(+)(out). In terms of biological role, core subunit of the mitochondrial membrane respiratory chain NADH dehydrogenase (Complex I) which catalyzes electron transfer from NADH through the respiratory chain, using ubiquinone as an electron acceptor. Essential for the catalytic activity of complex I. The polypeptide is NADH-ubiquinone oxidoreductase chain 3 (Pan paniscus (Pygmy chimpanzee)).